Reading from the N-terminus, the 274-residue chain is Thiamine kinase (274 aa).

This sequence belongs to the thiamine kinase family.

The enzyme catalyses thiamine + ATP = thiamine phosphate + ADP + H(+). It functions in the pathway cofactor biosynthesis; thiamine diphosphate biosynthesis; thiamine phosphate from thiamine: step 1/1. Catalyzes the ATP-dependent phosphorylation of thiamine to thiamine phosphate. Is involved in thiamine salvage. The sequence is that of Thiamine kinase from Escherichia coli (strain K12 / MC4100 / BW2952).